The sequence spans 158 residues: NADPH-dependent 7-cyano-7-deazaguanine reductase (158 aa).

Polar residues predominate over residues 1-13 (MAKRSNTTMTSAG). Residues 1–37 (MAKRSNTTMTSAGLQLGREVAPPDSPETAKLDRVPNP) are disordered. Over residues 27–37 (ETAKLDRVPNP) the composition is skewed to basic and acidic residues. The active-site Thioimide intermediate is the C56. The Proton donor role is filled by D63. Residues 78-80 (VES) and 97-98 (HE) contribute to the substrate site.

It belongs to the GTP cyclohydrolase I family. QueF type 1 subfamily.

It localises to the cytoplasm. It catalyses the reaction 7-aminomethyl-7-carbaguanine + 2 NADP(+) = 7-cyano-7-deazaguanine + 2 NADPH + 3 H(+). It functions in the pathway tRNA modification; tRNA-queuosine biosynthesis. In terms of biological role, catalyzes the NADPH-dependent reduction of 7-cyano-7-deazaguanine (preQ0) to 7-aminomethyl-7-deazaguanine (preQ1). This Bradyrhizobium sp. (strain ORS 278) protein is NADPH-dependent 7-cyano-7-deazaguanine reductase.